An 88-amino-acid chain; its full sequence is ATP synthase subunit 9, mitochondrial (88 aa).

2 helical membrane-spanning segments follow: residues Ile-8 to Phe-28 and Leu-45 to Phe-72.

Belongs to the ATPase C chain family. As to quaternary structure, F-type ATPases have 2 components, CF(1) - the catalytic core - and CF(0) - the membrane proton channel. CF(1) has five subunits: alpha(3), beta(3), gamma(1), delta(1), epsilon(1). CF(0) has three main subunits: a, b and c.

Its subcellular location is the mitochondrion membrane. The catalysed reaction is ATP + H2O + 4 H(+)(in) = ADP + phosphate + 5 H(+)(out). Functionally, this protein is one of the chains of the nonenzymatic membrane component (F0) of mitochondrial ATPase. This Beta vulgaris (Sugar beet) protein is ATP synthase subunit 9, mitochondrial (ATP9).